Reading from the N-terminus, the 150-residue chain is Large ribosomal subunit protein bL9 (150 aa).

The protein belongs to the bacterial ribosomal protein bL9 family.

In terms of biological role, binds to the 23S rRNA. The chain is Large ribosomal subunit protein bL9 from Renibacterium salmoninarum (strain ATCC 33209 / DSM 20767 / JCM 11484 / NBRC 15589 / NCIMB 2235).